The primary structure comprises 215 residues: MNPFVIAIDGPAASGKGTLARKIAAHYHFHHLDTGLTYRSVAHALLQQGLTCDDETSAIAHAKKLDLNILNPNLLNAHEIGEAASKIATIPAVRKILVAKQRDFIKIPPGSVLDGRDIGTVVCPDADIKFYIVANIQTRAKRRYQEILKRGRHADYQKILADLKQRDERDMTRQQSPLKSAENAHLLDTSELSIEEAFAAACTLIDPLIKARAAL.

ATP is bound at residue 10–18 (GPAASGKGT).

The protein belongs to the cytidylate kinase family. Type 1 subfamily.

The protein localises to the cytoplasm. It catalyses the reaction CMP + ATP = CDP + ADP. The catalysed reaction is dCMP + ATP = dCDP + ADP. This is Cytidylate kinase from Bartonella bacilliformis (strain ATCC 35685 / KC583 / Herrer 020/F12,63).